The chain runs to 316 residues: Secondary metabolism regulator laeA (316 aa).

Belongs to the methyltransferase superfamily. LaeA methyltransferase family. Component of the heterotrimeric velvet complex composed of laeA, ve1 and velB; Ve1 acting as a bridging protein between laeA and velB. Interacts directly with veA.

The protein localises to the nucleus. Its subcellular location is the cytoplasm. The enzyme catalyses L-methionyl-[protein] + S-adenosyl-L-methionine = S-methyl-L-methionyl-[protein] + S-adenosyl-L-homocysteine. Its function is as follows. Methyltransferase that performs automethylation. No other methyl-accepting substrate has been identified yet. Component of the velvet transcription factor complex that acts as a global regulator for secondary metabolite gene expression. Controls the expression of the mycotoxins trichothecenes and zearalenon gene clusters. Negatively controls perithecial induction, but positively controls virulence toward the host plant. The sequence is that of Secondary metabolism regulator laeA from Gibberella zeae (strain ATCC MYA-4620 / CBS 123657 / FGSC 9075 / NRRL 31084 / PH-1) (Wheat head blight fungus).